Here is a 376-residue protein sequence, read N- to C-terminus: Erythronate-4-phosphate dehydrogenase (376 aa).

Residues Ser-45 and Thr-67 each coordinate substrate. Position 147 (Asp-147) interacts with NAD(+). Residue Arg-209 is part of the active site. Residue Asp-233 participates in NAD(+) binding. Glu-238 is a catalytic residue. Residue His-255 is the Proton donor of the active site. An NAD(+)-binding site is contributed by Gly-258. Tyr-259 contributes to the substrate binding site.

This sequence belongs to the D-isomer specific 2-hydroxyacid dehydrogenase family. PdxB subfamily. Homodimer.

It is found in the cytoplasm. It carries out the reaction 4-phospho-D-erythronate + NAD(+) = (R)-3-hydroxy-2-oxo-4-phosphooxybutanoate + NADH + H(+). Its pathway is cofactor biosynthesis; pyridoxine 5'-phosphate biosynthesis; pyridoxine 5'-phosphate from D-erythrose 4-phosphate: step 2/5. Catalyzes the oxidation of erythronate-4-phosphate to 3-hydroxy-2-oxo-4-phosphonooxybutanoate. The polypeptide is Erythronate-4-phosphate dehydrogenase (Shewanella loihica (strain ATCC BAA-1088 / PV-4)).